The primary structure comprises 201 residues: Small ribosomal subunit protein uS4c (201 aa).

Residues 20–43 form a disordered region; sequence GLTNKRPKSRNDPTNQSSSRKISQ. Residues 31-41 are compositionally biased toward polar residues; it reads DPTNQSSSRKI. The 69-residue stretch at 89 to 157 folds into the S4 RNA-binding domain; that stretch reads MRLDNIIFRL…IGKNLDLSQK (69 aa).

Belongs to the universal ribosomal protein uS4 family. Part of the 30S ribosomal subunit. Contacts protein S5. The interaction surface between S4 and S5 is involved in control of translational fidelity.

Its subcellular location is the plastid. The protein localises to the chloroplast. Its function is as follows. One of the primary rRNA binding proteins, it binds directly to 16S rRNA where it nucleates assembly of the body of the 30S subunit. In terms of biological role, with S5 and S12 plays an important role in translational accuracy. This Cycas taitungensis (Prince sago) protein is Small ribosomal subunit protein uS4c (rps4).